The following is a 364-amino-acid chain: Methylthioribose-1-phosphate isomerase (364 aa).

Residue aspartate 254 is the Proton donor of the active site.

This sequence belongs to the eIF-2B alpha/beta/delta subunits family. MtnA subfamily.

It localises to the cytoplasm. It is found in the nucleus. The catalysed reaction is 5-(methylsulfanyl)-alpha-D-ribose 1-phosphate = 5-(methylsulfanyl)-D-ribulose 1-phosphate. It functions in the pathway amino-acid biosynthesis; L-methionine biosynthesis via salvage pathway; L-methionine from S-methyl-5-thio-alpha-D-ribose 1-phosphate: step 1/6. Functionally, catalyzes the interconversion of methylthioribose-1-phosphate (MTR-1-P) into methylthioribulose-1-phosphate (MTRu-1-P). This Drosophila melanogaster (Fruit fly) protein is Methylthioribose-1-phosphate isomerase.